A 100-amino-acid chain; its full sequence is NADH-quinone oxidoreductase subunit K (100 aa).

A run of 3 helical transmembrane segments spans residues 4–24, 28–48, and 60–80; these read LQHG…GLVI, LLFM…AFVV, and VMYI…LALL.

This sequence belongs to the complex I subunit 4L family. As to quaternary structure, NDH-1 is composed of 13 different subunits. Subunits NuoA, H, J, K, L, M, N constitute the membrane sector of the complex.

Its subcellular location is the cell inner membrane. The catalysed reaction is a quinone + NADH + 5 H(+)(in) = a quinol + NAD(+) + 4 H(+)(out). Functionally, NDH-1 shuttles electrons from NADH, via FMN and iron-sulfur (Fe-S) centers, to quinones in the respiratory chain. The immediate electron acceptor for the enzyme in this species is believed to be ubiquinone. Couples the redox reaction to proton translocation (for every two electrons transferred, four hydrogen ions are translocated across the cytoplasmic membrane), and thus conserves the redox energy in a proton gradient. The protein is NADH-quinone oxidoreductase subunit K of Shigella boydii serotype 18 (strain CDC 3083-94 / BS512).